We begin with the raw amino-acid sequence, 341 residues long: tRNA N6-adenosine threonylcarbamoyltransferase (341 aa).

Residues H115 and H119 each contribute to the Fe cation site. Residues 137 to 141, D170, G183, D187, and N276 contribute to the substrate site; that span reads IVSGG. D304 serves as a coordination point for Fe cation.

The protein belongs to the KAE1 / TsaD family. It depends on Fe(2+) as a cofactor.

Its subcellular location is the cytoplasm. It carries out the reaction L-threonylcarbamoyladenylate + adenosine(37) in tRNA = N(6)-L-threonylcarbamoyladenosine(37) in tRNA + AMP + H(+). Its function is as follows. Required for the formation of a threonylcarbamoyl group on adenosine at position 37 (t(6)A37) in tRNAs that read codons beginning with adenine. Is involved in the transfer of the threonylcarbamoyl moiety of threonylcarbamoyl-AMP (TC-AMP) to the N6 group of A37, together with TsaE and TsaB. TsaD likely plays a direct catalytic role in this reaction. This Staphylococcus aureus (strain MRSA252) protein is tRNA N6-adenosine threonylcarbamoyltransferase.